A 246-amino-acid polypeptide reads, in one-letter code: Protein phosphatase PhpP (246 aa).

A PPM-type phosphatase domain is found at 2 to 240 (EISLLTDVGQ…DNITVALVSM (239 aa)). Positions 36, 37, 192, and 231 each coordinate Mn(2+).

This sequence belongs to the PP2C family. In terms of assembly, interacts with the kinase domain of StkP. Mn(2+) is required as a cofactor.

It is found in the cytoplasm. It catalyses the reaction O-phospho-L-seryl-[protein] + H2O = L-seryl-[protein] + phosphate. It carries out the reaction O-phospho-L-threonyl-[protein] + H2O = L-threonyl-[protein] + phosphate. Phosphatase activity is inhibited by NaF but not by okadaic acid. Functionally, protein phosphatase able to dephosphorylate StkP-P and a phosphothreonine residue in a phosphopeptide synthetic substrate. PhpP and its cognate protein kinase StkP appear to constitute a functional signaling couple in vivo, PhpP's primary role probably being to control phosphorylation levels of StkP and of its targets (which include LocZ, DivIVA and KhpB (also called EloR/Jag)). PhpP thus performs an essential control of StkP activity. Overexpression confers an stkP deletion-like phenotype. The polypeptide is Protein phosphatase PhpP (phpP) (Streptococcus pneumoniae).